A 74-amino-acid polypeptide reads, in one-letter code: uncharacterized protein (74 aa).

Residues M1 to A19 form the signal peptide.

This is an uncharacterized protein from Mycobacterium tuberculosis (strain ATCC 25618 / H37Rv).